We begin with the raw amino-acid sequence, 737 residues long: Phosphoribosylformylglycinamidine synthase subunit PurL (737 aa).

The active site involves His-50. Residues Tyr-53 and Lys-92 each contribute to the ATP site. Glu-94 contacts Mg(2+). Substrate-binding positions include 95–98 (SHNH) and Arg-117. His-96 functions as the Proton acceptor in the catalytic mechanism. Asp-118 contacts Mg(2+). Gln-241 contacts substrate. Asp-269 serves as a coordination point for Mg(2+). 313–315 (ESQ) provides a ligand contact to substrate. ATP contacts are provided by Asp-494 and Gly-531. Asn-532 is a binding site for Mg(2+). Ser-534 serves as a coordination point for substrate.

The protein belongs to the FGAMS family. Monomer. Part of the FGAM synthase complex composed of 1 PurL, 1 PurQ and 2 PurS subunits.

The protein localises to the cytoplasm. The enzyme catalyses N(2)-formyl-N(1)-(5-phospho-beta-D-ribosyl)glycinamide + L-glutamine + ATP + H2O = 2-formamido-N(1)-(5-O-phospho-beta-D-ribosyl)acetamidine + L-glutamate + ADP + phosphate + H(+). Its pathway is purine metabolism; IMP biosynthesis via de novo pathway; 5-amino-1-(5-phospho-D-ribosyl)imidazole from N(2)-formyl-N(1)-(5-phospho-D-ribosyl)glycinamide: step 1/2. In terms of biological role, part of the phosphoribosylformylglycinamidine synthase complex involved in the purines biosynthetic pathway. Catalyzes the ATP-dependent conversion of formylglycinamide ribonucleotide (FGAR) and glutamine to yield formylglycinamidine ribonucleotide (FGAM) and glutamate. The FGAM synthase complex is composed of three subunits. PurQ produces an ammonia molecule by converting glutamine to glutamate. PurL transfers the ammonia molecule to FGAR to form FGAM in an ATP-dependent manner. PurS interacts with PurQ and PurL and is thought to assist in the transfer of the ammonia molecule from PurQ to PurL. The sequence is that of Phosphoribosylformylglycinamidine synthase subunit PurL from Nitrobacter winogradskyi (strain ATCC 25391 / DSM 10237 / CIP 104748 / NCIMB 11846 / Nb-255).